We begin with the raw amino-acid sequence, 544 residues long: Glucose starvation modulator protein 1 (544 aa).

Positions cysteine 20 to cysteine 48 form a DNA-binding region, zn(2)-C6 fungal-type. The disordered stretch occupies residues lysine 65–histidine 93. Residues arginine 70–serine 86 show a composition bias toward low complexity. In terms of domain architecture, PAS spans serine 403–glycine 475.

The protein belongs to the ERT1/acuK family.

Its subcellular location is the nucleus. Functionally, transcription factor which regulates nonfermentable carbon utilization. In Debaryomyces hansenii (strain ATCC 36239 / CBS 767 / BCRC 21394 / JCM 1990 / NBRC 0083 / IGC 2968) (Yeast), this protein is Glucose starvation modulator protein 1 (GSM1).